Here is a 142-residue protein sequence, read N- to C-terminus: Large ribosomal subunit protein uL11 (142 aa).

This sequence belongs to the universal ribosomal protein uL11 family. As to quaternary structure, part of the ribosomal stalk of the 50S ribosomal subunit. Interacts with L10 and the large rRNA to form the base of the stalk. L10 forms an elongated spine to which L12 dimers bind in a sequential fashion forming a multimeric L10(L12)X complex. One or more lysine residues are methylated.

Forms part of the ribosomal stalk which helps the ribosome interact with GTP-bound translation factors. This Pseudoalteromonas atlantica (strain T6c / ATCC BAA-1087) protein is Large ribosomal subunit protein uL11.